The chain runs to 220 residues: Charged multivesicular body protein 5 (220 aa).

Over residues 1–10 (MNRIFGRGKP) the composition is skewed to basic residues. Residues 1–27 (MNRIFGRGKPKGPPPNLTDCISGVDSR) form a disordered region. 2 coiled-coil regions span residues 25 to 55 (DSRAESVDKKIARLDAELMKYKDQMKKMRDG) and 121 to 153 (KNVKIDQIEDLQDQLEDMMEDANEVQEALSRSY). The interval 178–206 (DDNSYLDEASSAPAIPEGAPGDRTTNRDG) is disordered.

This sequence belongs to the SNF7 family. Probable peripherally associated component of the endosomal sorting required for transport complex III (ESCRT-III).

It localises to the cytoplasm. The protein resides in the cytosol. Its subcellular location is the endosome membrane. Its function is as follows. Probable peripherally associated component of the endosomal sorting required for transport complex III (ESCRT-III) which is involved in multivesicular bodies (MVBs) formation and sorting of endosomal cargo proteins into MVBs. MVBs contain intraluminal vesicles (ILVs) that are generated by invagination and scission from the limiting membrane of the endosome and mostly are delivered to lysosomes enabling degradation of membrane proteins, such as stimulated growth factor receptors, lysosomal enzymes and lipids. In Danio rerio (Zebrafish), this protein is Charged multivesicular body protein 5 (chmp5).